A 305-amino-acid polypeptide reads, in one-letter code: tRNA dimethylallyltransferase (305 aa).

Residue 12–19 (GPTASGKT) participates in ATP binding. 14–19 (TASGKT) lines the substrate pocket. 3 interaction with substrate tRNA regions span residues 37 to 40 (DSAL), 161 to 165 (QRLAR), and 242 to 247 (RCVGYR).

The protein belongs to the IPP transferase family. In terms of assembly, monomer. Mg(2+) is required as a cofactor.

The catalysed reaction is adenosine(37) in tRNA + dimethylallyl diphosphate = N(6)-dimethylallyladenosine(37) in tRNA + diphosphate. In terms of biological role, catalyzes the transfer of a dimethylallyl group onto the adenine at position 37 in tRNAs that read codons beginning with uridine, leading to the formation of N6-(dimethylallyl)adenosine (i(6)A). In Psychromonas ingrahamii (strain DSM 17664 / CCUG 51855 / 37), this protein is tRNA dimethylallyltransferase.